The chain runs to 616 residues: MALLQIAEPGQSAAPHQHKLAVGIDLGTTNSLVAAVRSGSSEVLRDEQDRLLIPSIVHLTEDQAIVGYEAGQLASQDPQNTIISVKRLIGRSCTDVQQRYPNLPYQFNATENGLPLLKTRRGLLSPVEISAEILKKLTALAEQRLGGELTGAVITVPAYFDDAQRQSTKDAAKLAGLKVLRLLNEPTAAAIAYGLDSGQEGVIAVYDLGGGTFDVSILRLSKGVFEVLATGGDTALGGDDFDHLLAEWIVKKSTVAPQNDREKRQLIEVANQVKVALTTNDKIRISYAEQNLEIMRDEFNFLISGLVKRSLLACRRTLKDANLTPSDILEVVMVGGSTRIPYVREQVGEFFQCTPLTSIDPDKVVALGAAIQADILVGNKPDSEMLLLDVIPLSLGIETMGGLVEKIIPRNTTIPVARAQEFTTFKDGQTAMSVHVLQGEREMVTDCRSLARFTLRGIPAMVAGAARIRVTYQVDADGLLSVTAVEKSTGVQASTQVKPSYGLTDDEIANMLKSSMEHAKEDIQTRLLTEQRVDATRVIESVYSALQQDEDLLDDNELSAVKNALVSLQKLIQEEDSLAIKQGIKMLDQATQEFASRRMDKSIRRALSGQHIEHIK.

Belongs to the heat shock protein 70 family.

Its function is as follows. Chaperone involved in the maturation of iron-sulfur cluster-containing proteins. Has a low intrinsic ATPase activity which is markedly stimulated by HscB. The protein is Chaperone protein HscA homolog of Histophilus somni (strain 2336) (Haemophilus somnus).